The sequence spans 352 residues: MSEQQTMSELKQQALVDINEANDERALQEVKVKYLGKKGSVSGLMKLMKDLPNEEKPAFGQKVNELRQTIQNELDERQQMLVKEKLNKQLAEETVDVSLPGRHIEIGSKHPLTRTIEEIEDLFLGLGYEIVNGYEVEQDHYNFEMLNLPKSHPARDMQDSFYITDEILLRTHTSPVQARTMESRHGQGPVKIICPGKVYRRDSDDATHSHQFTQIEGLVVDKNVKMSDLKGTLELLAKKLFGADREIRLRPSYFPFTEPSVEVDVSCFKCKGKGCNVCKHTGWIEILGAGMVHPNVLEMAGFDSSEYSGFAFGMGPDRIAMLKYGIEDIRHFYTNDVRFLDQFKAVEDRGDM.

Glu-258 lines the Mg(2+) pocket.

Belongs to the class-II aminoacyl-tRNA synthetase family. Phe-tRNA synthetase alpha subunit type 1 subfamily. As to quaternary structure, tetramer of two alpha and two beta subunits. Mg(2+) serves as cofactor.

Its subcellular location is the cytoplasm. It catalyses the reaction tRNA(Phe) + L-phenylalanine + ATP = L-phenylalanyl-tRNA(Phe) + AMP + diphosphate + H(+). This chain is Phenylalanine--tRNA ligase alpha subunit, found in Staphylococcus aureus (strain bovine RF122 / ET3-1).